Here is a 548-residue protein sequence, read N- to C-terminus: Ran-binding protein 9 (548 aa).

Low complexity predominate over residues Met-1–His-14. Positions Met-1 to Pro-26 are disordered. A B30.2/SPRY domain is found at Ser-2–Phe-189. Over residues Leu-15–Pro-26 the composition is skewed to basic and acidic residues. A LisH domain is found at Trp-217 to Val-249. The CTLH domain occupies Ser-255–Val-312.

Belongs to the RANBP9/10 family. As to quaternary structure, identified in the CTLH complex that contains at least MAEA, RMND5A (or alternatively its paralog RMND5B), GID8, WDR26, and RANBP9 and/or RANBP10.

It is found in the cytoplasm. It localises to the cell membrane. Its subcellular location is the nucleus. May act as scaffolding protein, and as adapter protein to couple membrane receptors to intracellular signaling pathways. Acts as a mediator of cell spreading and actin cytoskeleton rearrangement. Core component of the CTLH E3 ubiquitin-protein ligase complex that mediates ubiquitination and subsequent proteasomal degradation of target proteins. The protein is Ran-binding protein 9 (ranbp9) of Xenopus tropicalis (Western clawed frog).